A 220-amino-acid polypeptide reads, in one-letter code: Large ribosomal subunit protein uL3 (220 aa).

The disordered stretch occupies residues 137–159 (GASHGAHKNHRKPGSIGGASTPS).

This sequence belongs to the universal ribosomal protein uL3 family. In terms of assembly, part of the 50S ribosomal subunit. Forms a cluster with proteins L14 and L19.

One of the primary rRNA binding proteins, it binds directly near the 3'-end of the 23S rRNA, where it nucleates assembly of the 50S subunit. This chain is Large ribosomal subunit protein uL3, found in Renibacterium salmoninarum (strain ATCC 33209 / DSM 20767 / JCM 11484 / NBRC 15589 / NCIMB 2235).